Reading from the N-terminus, the 257-residue chain is Phosphonates import ATP-binding protein PhnC (257 aa).

Residues 4 to 248 enclose the ABC transporter domain; the sequence is IEFKDVRKVY…AFNEIYGRSI (245 aa). 37-44 is an ATP binding site; the sequence is GLSGSGKS.

The protein belongs to the ABC transporter superfamily. Phosphonates importer (TC 3.A.1.9.1) family. In terms of assembly, the complex is composed of two ATP-binding proteins (PhnC), two transmembrane proteins (PhnE) and a solute-binding protein (PhnD).

It localises to the cell membrane. It carries out the reaction phosphonate(out) + ATP + H2O = phosphonate(in) + ADP + phosphate + H(+). Its function is as follows. Part of the ABC transporter complex PhnCDE involved in phosphonates import. Responsible for energy coupling to the transport system. This Staphylococcus saprophyticus subsp. saprophyticus (strain ATCC 15305 / DSM 20229 / NCIMB 8711 / NCTC 7292 / S-41) protein is Phosphonates import ATP-binding protein PhnC.